Here is a 186-residue protein sequence, read N- to C-terminus: Nucleoside diphosphate kinase 6 (186 aa).

6 residues coordinate ATP: Lys-19, Phe-68, Arg-96, Thr-102, Arg-116, and Asn-126. The Pros-phosphohistidine intermediate role is filled by His-129.

The protein belongs to the NDK family. It depends on Mg(2+) as a cofactor. In terms of tissue distribution, expressed at a moderately low level in many tissues. Most abundant in kidney, prostate, ovary, intestine, and spleen.

The enzyme catalyses a 2'-deoxyribonucleoside 5'-diphosphate + ATP = a 2'-deoxyribonucleoside 5'-triphosphate + ADP. It carries out the reaction a ribonucleoside 5'-diphosphate + ATP = a ribonucleoside 5'-triphosphate + ADP. In terms of biological role, major role in the synthesis of nucleoside triphosphates other than ATP. The ATP gamma phosphate is transferred to the NDP beta phosphate via a ping-pong mechanism, using a phosphorylated active-site intermediate. Inhibitor of p53-induced apoptosis. The sequence is that of Nucleoside diphosphate kinase 6 (NME6) from Homo sapiens (Human).